Consider the following 89-residue polypeptide: Small ribosomal subunit protein uS15 (89 aa).

The protein belongs to the universal ribosomal protein uS15 family. In terms of assembly, part of the 30S ribosomal subunit. Forms a bridge to the 50S subunit in the 70S ribosome, contacting the 23S rRNA.

Its function is as follows. One of the primary rRNA binding proteins, it binds directly to 16S rRNA where it helps nucleate assembly of the platform of the 30S subunit by binding and bridging several RNA helices of the 16S rRNA. In terms of biological role, forms an intersubunit bridge (bridge B4) with the 23S rRNA of the 50S subunit in the ribosome. This Cupriavidus pinatubonensis (strain JMP 134 / LMG 1197) (Cupriavidus necator (strain JMP 134)) protein is Small ribosomal subunit protein uS15.